Reading from the N-terminus, the 77-residue chain is Tachyplesin-1 (77 aa).

The signal sequence occupies residues 1–23; it reads MKKLVIALCLMMVLAVMVEEAEA. Disulfide bonds link cysteine 26/cysteine 39 and cysteine 30/cysteine 35. Arginine 40 bears the Arginine amide mark. The propeptide occupies 41-77; the sequence is GKRNEVRQYRDRGYDVRAIPEETFFTRQDEDEDDDEE.

The protein belongs to the tachyplesin/polyphemusin family. In terms of tissue distribution, hemocytes.

The protein localises to the secreted. Functionally, significantly inhibits the growth of Gram-negative and Gram-positive bacteria. The protein is Tachyplesin-1 of Tachypleus tridentatus (Japanese horseshoe crab).